The primary structure comprises 1102 residues: Carbamoyl phosphate synthase large chain (1102 aa).

The interval 1–408 (MPKRTDIQSV…AFQKALRSLE (408 aa)) is carboxyphosphate synthetic domain. Residues arginine 129, arginine 175, glycine 181, glycine 182, glutamate 214, isoleucine 216, glutamate 221, glycine 247, valine 248, histidine 249, glutamine 291, and glutamate 305 each contribute to the ATP site. One can recognise an ATP-grasp 1 domain in the interval 137–334 (EEVRKKIGHG…IAKIAAKLAV (198 aa)). Mg(2+)-binding residues include glutamine 291, glutamate 305, and asparagine 307. 3 residues coordinate Mn(2+): glutamine 291, glutamate 305, and asparagine 307. An oligomerization domain region spans residues 409-551 (KKGSQFTFVG…YFYSSYDEES (143 aa)). The carbamoyl phosphate synthetic domain stretch occupies residues 552–954 (EVAPREKPAV…AYAKSQAGAY (403 aa)). Residues 682–873 (GRVLAEAGLP…LAKAAARISL (192 aa)) form the ATP-grasp 2 domain. ATP-binding residues include arginine 718, arginine 757, leucine 759, glutamate 764, glycine 789, isoleucine 790, histidine 791, serine 792, glutamine 832, and glutamate 844. Mg(2+) is bound by residues glutamine 832, glutamate 844, and asparagine 846. 3 residues coordinate Mn(2+): glutamine 832, glutamate 844, and asparagine 846. The region spanning 955-1100 (GPLPTKGRAF…QEHAAFLIAA (146 aa)) is the MGS-like domain. The interval 955 to 1102 (GPLPTKGRAF…HAAFLIAARD (148 aa)) is allosteric domain.

Belongs to the CarB family. As to quaternary structure, composed of two chains; the small (or glutamine) chain promotes the hydrolysis of glutamine to ammonia, which is used by the large (or ammonia) chain to synthesize carbamoyl phosphate. Tetramer of heterodimers (alpha,beta)4. Requires Mg(2+) as cofactor. Mn(2+) serves as cofactor.

It carries out the reaction hydrogencarbonate + L-glutamine + 2 ATP + H2O = carbamoyl phosphate + L-glutamate + 2 ADP + phosphate + 2 H(+). The enzyme catalyses hydrogencarbonate + NH4(+) + 2 ATP = carbamoyl phosphate + 2 ADP + phosphate + 2 H(+). Its pathway is amino-acid biosynthesis; L-arginine biosynthesis; carbamoyl phosphate from bicarbonate: step 1/1. The protein operates within pyrimidine metabolism; UMP biosynthesis via de novo pathway; (S)-dihydroorotate from bicarbonate: step 1/3. Large subunit of the glutamine-dependent carbamoyl phosphate synthetase (CPSase). CPSase catalyzes the formation of carbamoyl phosphate from the ammonia moiety of glutamine, carbonate, and phosphate donated by ATP, constituting the first step of 2 biosynthetic pathways, one leading to arginine and/or urea and the other to pyrimidine nucleotides. The large subunit (synthetase) binds the substrates ammonia (free or transferred from glutamine from the small subunit), hydrogencarbonate and ATP and carries out an ATP-coupled ligase reaction, activating hydrogencarbonate by forming carboxy phosphate which reacts with ammonia to form carbamoyl phosphate. In Streptomyces coelicolor (strain ATCC BAA-471 / A3(2) / M145), this protein is Carbamoyl phosphate synthase large chain.